The sequence spans 553 residues: ATP synthase F(1) complex subunit alpha, mitochondrial (553 aa).

The transit peptide at 1–43 directs the protein to the mitochondrion; the sequence is MLSVRVAAAVARALPRRAGLVSKNALGSSFVGARNLHASNTRL. Residues Ser53 and Ser65 each carry the phosphoserine modification. Ser76 is subject to Phosphoserine; alternate. O-linked (GlcNAc) serine; alternate glycosylation occurs at Ser76. Ser106 is subject to Phosphoserine. An N6-acetyllysine mark is found at Lys123, Lys126, and Lys132. Position 134 is a phosphothreonine (Thr134). Lys161 carries the post-translational modification N6-acetyllysine; alternate. Lys161 bears the N6-succinyllysine; alternate mark. Ser166 carries the phosphoserine modification. N6-acetyllysine; alternate is present on Lys167. The residue at position 167 (Lys167) is an N6-succinyllysine; alternate. At Ser184 the chain carries Phosphoserine. Arg204 carries the post-translational modification Omega-N-methylarginine. Residues Gln215, Gly217, Lys218, Thr219, and Ser220 each coordinate ATP. Mg(2+) is bound at residue Thr219. 2 positions are modified to N6-acetyllysine; alternate: Lys230 and Lys239. Residues Lys230 and Lys239 each carry the N6-succinyllysine; alternate modification. Residue Lys240 is modified to N6-acetyllysine. N6-acetyllysine; alternate is present on residues Lys261 and Lys305. Residues Lys261 and Lys305 each carry the N6-succinyllysine; alternate modification. Asp312 is a binding site for Mg(2+). Lys427 is subject to N6-acetyllysine; alternate. The residue at position 427 (Lys427) is an N6-succinyllysine; alternate. Position 434 is an N6-acetyllysine (Lys434). 2 residues coordinate ATP: Gln473 and Gln475. N6-acetyllysine; alternate occurs at positions 498 and 506. Lys498 and Lys506 each carry N6-succinyllysine; alternate. At Ser521 the chain carries Phosphoserine. An N6-acetyllysine; alternate mark is found at Lys531 and Lys539. N6-succinyllysine; alternate occurs at positions 531 and 539. Residue Lys541 is modified to N6-acetyllysine.

It belongs to the ATPase alpha/beta chains family. In terms of assembly, homotrimer. Component of the ATP synthase complex composed at least of ATP5F1A/subunit alpha, ATP5F1B/subunit beta, ATP5MC1/subunit c (homooctomer), MT-ATP6/subunit a, MT-ATP8/subunit 8, ATP5ME/subunit e, ATP5MF/subunit f, ATP5MG/subunit g, ATP5MK/subunit k, ATP5MJ/subunit j, ATP5F1C/subunit gamma, ATP5F1D/subunit delta, ATP5F1E/subunit epsilon, ATP5PF/subunit F6, ATP5PB/subunit b, ATP5PD/subunit d, ATP5PO/subunit OSCP. ATP synthase complex consists of a soluble F(1) head domain (subunits alpha(3) and beta(3)) - the catalytic core - and a membrane F(0) domain - the membrane proton channel (subunits c, a, 8, e, f, g, k and j). These two domains are linked by a central stalk (subunits gamma, delta, and epsilon) rotating inside the F1 region and a stationary peripheral stalk (subunits F6, b, d, and OSCP). Interacts with ATPAF2. Interacts with HRG; the interaction occurs on the surface of T-cells and alters the cell morphology when associated with concanavalin (in vitro). Interacts with PLG (angiostatin peptide); the interaction inhibits most of the angiogenic properties of angiostatin. Interacts with BLOC1S1. Interacts with BCL2L1 isoform BCL-X(L); the interaction mediates the association of BCL2L1 isoform BCL-X(L) with the mitochondrial membrane F(1)F(0) ATP synthase and enhances neurons metabolic efficiency. Interacts with CLN5 and PPT1. Interacts with S100A1; this interaction increases F1-ATPase activity. Interacts with ABCB7; this interaction allows the regulation of cellular iron homeostasis and cellular reactive oxygen species (ROS) levels in cardiomyocytes. Post-translationally, acetylated on lysine residues. BLOC1S1 is required for acetylation. Acetylation of Lys-132, Lys-230 and Lys-498 is observed in liver mitochondria from fasted mice but not from fed mice.

It localises to the mitochondrion inner membrane. Its subcellular location is the cell membrane. Its function is as follows. Subunit alpha, of the mitochondrial membrane ATP synthase complex (F(1)F(0) ATP synthase or Complex V) that produces ATP from ADP in the presence of a proton gradient across the membrane which is generated by electron transport complexes of the respiratory chain. ATP synthase complex consist of a soluble F(1) head domain - the catalytic core - and a membrane F(1) domain - the membrane proton channel. These two domains are linked by a central stalk rotating inside the F(1) region and a stationary peripheral stalk. During catalysis, ATP synthesis in the catalytic domain of F(1) is coupled via a rotary mechanism of the central stalk subunits to proton translocation. In vivo, can only synthesize ATP although its ATP hydrolase activity can be activated artificially in vitro. With the catalytic subunit beta (ATP5F1B), forms the catalytic core in the F(1) domain. Subunit alpha does not bear the catalytic high-affinity ATP-binding sites. The sequence is that of ATP synthase F(1) complex subunit alpha, mitochondrial from Mus musculus (Mouse).